A 185-amino-acid chain; its full sequence is Ribosome-recycling factor (185 aa).

The protein belongs to the RRF family.

The protein localises to the cytoplasm. In terms of biological role, responsible for the release of ribosomes from messenger RNA at the termination of protein biosynthesis. May increase the efficiency of translation by recycling ribosomes from one round of translation to another. This chain is Ribosome-recycling factor, found in Mannheimia succiniciproducens (strain KCTC 0769BP / MBEL55E).